Here is a 446-residue protein sequence, read N- to C-terminus: MESDNLQDPQEETLTCSICQGIFMDPVYLRCGHKFCETCLLLFQEDIKFPAYCPTCRQPCNQRYINDISLKKQVFIVRKKRLMEYLNSEEHKCVTHKAKKMIFCDKSKILLCHLCSDSQEHSGHTHCSIDVAVQEKMEELLKHMDSLWQRLKIQQNYVEKERRMTLWWLKSVKLREEVIKRVYGKQCPPLSEERDQHIECLRHQSNTTLEELRKSEATIVHERNQLTEVYQELMTMSQRPYQELLVQDLDDLFRRSKLAAKVDMPQGMIPRLRAHSIPGLTARLNSFRVKISFKHSIMFGYNSVRPFDIRLLHESTSLDSAKTHRVSWGKKSFSRGKYYWEVDLKDYRRWTVGVCKDPWLRGRSYVVTPTDIFLLECLRNKDHYILITRIGREHYIEKPVGQVGVFLDCEGGYVSFVDVAKSSLILSYSPGTFHCAVRPFFFAAYT.

Residues 16 to 57 (CSICQGIFMDPVYLRCGHKFCETCLLLFQEDIKFPAYCPTCR) form an RING-type zinc finger. Residues 88–129 (SEEHKCVTHKAKKMIFCDKSKILLCHLCSDSQEHSGHTHCSI) form a B box-type zinc finger. 4 residues coordinate Zn(2+): C93, H96, C115, and H121. The 176-residue stretch at 271–446 (RLRAHSIPGL…VRPFFFAAYT (176 aa)) folds into the B30.2/SPRY domain.

Belongs to the TRIM/RBCC family.

In Mus musculus (Mouse), this protein is Tripartite motif-containing protein 43C.